Reading from the N-terminus, the 441-residue chain is Transducin-like enhancer protein 7 (441 aa).

Disordered regions lie at residues 1 to 77 (MSGE…QWHL) and 91 to 119 (PDAQ…SSSS). The segment covering 27–49 (ESSGVSSQPEPQVQQQLGSLLGV) has biased composition (low complexity). A compositionally biased stretch (polar residues) spans 62–76 (PADQETSTVTQQQWH). Low complexity predominate over residues 108 to 119 (GSEVGQPYSSSS). WD repeat units follow at residues 156–194 (FHGK…AGEK), 204–243 (HPQD…QVRA), 247–285 (STGP…LIRK), 286–325 (HEVP…RLHQ), and 409–441 (EESS…QLLY).

This sequence belongs to the WD repeat Groucho/TLE family.

The sequence is that of Transducin-like enhancer protein 7 from Homo sapiens (Human).